The chain runs to 450 residues: Beclin-1 (450 aa).

An N-acetylmethionine modification is found at M1. Residues S15 and S30 each carry the phosphoserine modification. The disordered stretch occupies residues T48–T72. 3 positions are modified to phosphoserine; by AMPK: S90, S93, and S96. A BH3 motif is present at residues T108–S127. Residues L112–C159 form an interaction with BCL2 and BCL2L1 region. T119 bears the Phosphothreonine; by DAPK1 mark. Residues D142–V269 are a coiled coil. The segment at D245–K450 is evolutionary conserved domain (ECD). Glycyl lysine isopeptide (Lys-Gly) (interchain with G-Cter in ubiquitin) cross-links involve residues K402 and K437. Positions W425–K450 are required for membrane-association.

It belongs to the beclin family. As to quaternary structure, a homodimeric form is proposed to exist; this metastable form readily transits to ATG14- or UVRAG-containing complexes with BECN1:UVRAG being more stable than BECN1:ATG14. Component of the PI3K (PI3KC3/PI3K-III/class III phosphatidylinositol 3-kinase) complex the core of which is composed of the catalytic subunit PIK3C3, the regulatory subunit PIK3R4 and BECN1 associating with additional regulatory/auxiliary subunits to form alternative complex forms. Alternative complex forms containing a fourth regulatory subunit in a mutually exclusive manner are PI3K complex I (PI3KC3-C1) containing ATG14, and PI3K complex II (PI3KC3-C2) containing UVRAG. PI3KC3-C1 displays a V-shaped architecture with PIK3R4 serving as a bridge between PIK3C3 and the ATG14:BECN1 subcomplex. Both, PI3KC3-C1 and PI3KC3-C2, can associate with further regulatory subunits, such as RUBCN, SH3GLB1/Bif-1 and AMBRA1. PI3KC3-C1 probably associates with PIK3CB. Forms a complex with PPP2CA and AMBRA1; AMBRA1 and BECN1 components of the complex regulate MYC stability via different pathways. Component of the complex, at least composed of LRPPRC, BECN1 and BCL2; the interactions prevent BECN1 from forming an autophagy-inducing complex with PIK3C3. Interacts with AMBRA1, GOPC, GRID2. Interacts with BCL2 and BCL2L1 isoform Bcl-X(L); the interaction inhibits BECN1 function in promoting autophagy by interfering with the formation of the PI3K complex. Interacts with cytosolic HMGB1; inhibits the interaction of BECN1 and BCL2 leading to promotion of autophagy. Interacts with USP10, USP13, VMP1, DAPK1, RAB39A. Interacts with the poly-Gln domain of ATXN3; the interaction causes deubiquitination at Lys-402 and stabilizes BECN1. Interacts with SLAMF1. Interacts with TRIM5; the interaction causes activation of BECN1 by causing its dissociation from its inhibitors BCL2 and TAB2. Interacts with active ULK1 (phosphorylated on 'Ser-317') and MEFV simultaneously. Interacts with WDR81 and WDR91; negatively regulates the PI3 kinase/PI3K activity associated with endosomal membranes. Interacts with LAPTM4B; competes with EGFR for LAPTM4B binding; regulates EGFR activity. Interacts with TRIM50. Interacts with TRIM16. Interacts with ATG14; this interaction is increased in the absence of TMEM39A. Interacts with WASHC1; preventing interaction with AMBRA1 and the DCX(AMBRA1) complex and subsequent ubiquitination. Interacts with TRIM17. Interacts with BCL2L10/BCL-B (via BH1 domain). Interacts with SH3BGRL. Interacts with IRGM; enhancing BECN1-interacting partners and influencing the composition of the BECN1 complex. Interacts with ARMC3. Interacts with LRPPRC. Phosphorylation at Thr-119 by DAPK1 reduces its interaction with BCL2 and BCL2L1 and promotes induction of autophagy. In response to autophagic stimuli, phosphorylated at serine residues by AMPK in an ATG14-dependent manner, and this phosphorylation is critical for maximally efficient autophagy. In terms of processing, polyubiquitinated by NEDD4, both with 'Lys-11'- and 'Lys-63'-linkages. 'Lys-11'-linked polyubiquitination leads to degradation and is enhanced when the stabilizing interaction partner VPS34 is depleted. Deubiquitinated by USP10 and USP13, leading to stabilize the PIK3C3/VPS34-containing complexes. Polyubiquitinated at Lys-402 with 'Lys-48'-linkages. 'Lys-48'-linked polyubiquitination of Lys-402 leads to degradation. Deubiquitinated by ATXN3, leading to stabilization. Ubiquitinated at Lys-437 via 'Lys-63'-linkage by the DCX(AMBRA1) complex, thereby increasing the association between BECN1 and PIK3C3 to promote PIK3C3 activity. 'Lys-48'-linked ubiquitination by RNF216 leads to proteasomal degradation and autophagy inhibition. Post-translationally, proteolytically processed by caspases including CASP8 and CASP3; the C-terminal fragments lack autophagy-inducing capacity and are proposed to induce apoptosis. Thus the cleavage is proposed to be an determinant to switch from autophagy to apoptosis pathways affecting cellular homeostasis including viral infections and survival of tumor cells.

The protein resides in the cytoplasm. Its subcellular location is the golgi apparatus. It localises to the trans-Golgi network membrane. The protein localises to the endosome membrane. It is found in the endoplasmic reticulum membrane. The protein resides in the mitochondrion membrane. Its subcellular location is the cytoplasmic vesicle. It localises to the autophagosome. The protein localises to the mitochondrion. It is found in the nucleus. Functionally, plays a central role in autophagy. Acts as a core subunit of the PI3K complex that mediates formation of phosphatidylinositol 3-phosphate; different complex forms are believed to play a role in multiple membrane trafficking pathways: PI3KC3-C1 is involved in initiation of autophagosomes and PI3KC3-C2 in maturation of autophagosomes and endocytosis. Involved in regulation of degradative endocytic trafficking and required for the abscission step in cytokinesis, probably in the context of PI3KC3-C2. Essential for the formation of PI3KC3-C2 but not PI3KC3-C1 PI3K complex forms. Involved in endocytosis. May play a role in antiviral host defense. Beclin-1-C 35 kDa localized to mitochondria can promote apoptosis; it induces the mitochondrial translocation of BAX and the release of proapoptotic factors. The protein is Beclin-1 (BECN1) of Pongo abelii (Sumatran orangutan).